A 562-amino-acid polypeptide reads, in one-letter code: Probable malate:quinone oxidoreductase (562 aa).

The interval 530–562 (EVPDKSATPTDPTIAPKHQHSTTHNANSEMQAL) is disordered. The span at 551 to 562 (TTHNANSEMQAL) shows a compositional bias: polar residues.

Belongs to the MQO family. It depends on FAD as a cofactor.

The enzyme catalyses (S)-malate + a quinone = a quinol + oxaloacetate. It functions in the pathway carbohydrate metabolism; tricarboxylic acid cycle; oxaloacetate from (S)-malate (quinone route): step 1/1. The chain is Probable malate:quinone oxidoreductase from Xylella fastidiosa (strain M12).